The chain runs to 332 residues: UPF0194 membrane protein YbhG (332 aa).

A signal peptide spans 1–16 (MMKKPVVIGLAVVVLA). The stretch at 108 to 209 (EEIAQAAAAV…LNLQDSTLIA (102 aa)) forms a coiled coil.

This sequence belongs to the UPF0194 family.

It localises to the periplasm. The chain is UPF0194 membrane protein YbhG from Escherichia coli (strain 55989 / EAEC).